Reading from the N-terminus, the 523-residue chain is Xanthotoxin 5-hydroxylase CYP82C2 (523 aa).

Residues 1 to 21 form a helical membrane-spanning segment; the sequence is MDTSLFSLFVPILVFVFIALF. Cys462 provides a ligand contact to heme.

The protein belongs to the cytochrome P450 family. It depends on heme as a cofactor.

The protein localises to the membrane. It carries out the reaction xanthotoxin + reduced [NADPH--hemoprotein reductase] + O2 = 5-hydroxyxanthotoxin + oxidized [NADPH--hemoprotein reductase] + H2O + 2 H(+). The catalysed reaction is indole-3-carbonyl nitrile + reduced [NADPH--hemoprotein reductase] + O2 = 4-hydroxy-indole-3-carbonyl nitrile + oxidized [NADPH--hemoprotein reductase] + H2O + H(+). In terms of biological role, involved in the biosynthetic pathway to 4-hydroxyindole-3-carbonyl nitrile (4-OH-ICN), a cyanogenic metabolite required for inducible pathogen defense. Converts indole-3-carbonyl nitrile (ICN) into 4-OH-ICN. Can hydroxylate xanthotoxin (8-methoxypsoralen) to form 5-hydroxyxanthotoxin (5-hydroxy-8-methoxypsoralen) in vivo and in vitro. The polypeptide is Xanthotoxin 5-hydroxylase CYP82C2 (Arabidopsis thaliana (Mouse-ear cress)).